The sequence spans 1773 residues: Mucin-22 (1773 aa).

The first 26 residues, 1-26, serve as a signal peptide directing secretion; the sequence is MRRGNISPAFWFLWLLLFGLLGPSSE. The Extracellular portion of the chain corresponds to 27–1660; it reads NTTAFTKGSD…VIKPSGYLQP (1634 aa). Disordered stretches follow at residues 61–102, 176–357, 372–405, 434–572, 590–674, 754–1026, 1064–1485, and 1603–1639; these read TGSK…TDSG, TMAS…SETT, MGSE…VGSE, SETI…STAS, TVGS…EGSE, DTTT…ETTM, TTIA…GSET, and MGAS…SMGT. Positions 153-1514 are 124 X 10 AA approximate repeats; sequence MASSTTSTAG…PTATSLTGSE (1362 aa). The span at 178–243 shows a compositional bias: low complexity; sequence ASTTGSETAT…GSEATTTSTA (66 aa). Positions 248-258 are enriched in polar residues; the sequence is ITASSMSSETT. The segment covering 262 to 357 has biased composition (low complexity); the sequence is AAGSNTTTAS…TVSTAGSETT (96 aa). 2 stretches are compositionally biased toward low complexity: residues 440–481 and 490–546; these read STAG…AAST and STAG…SEPT. The span at 547-572 shows a compositional bias: polar residues; the sequence is MASTMGSETTMASTIGPETTKVSTAS. Low complexity-rich tracts occupy residues 755-1025 and 1064-1465; these read TTTA…SETT and TTIA…GSET. Polar residues-rich tracts occupy residues 1466–1485 and 1615–1639; these read NTAC…GSET and RTTT…SMGT. A helical membrane pass occupies residues 1661 to 1681; that stretch reads WAIILISLAAVVAAVGLSVGL. The Cytoplasmic portion of the chain corresponds to 1682–1773; the sequence is SFCLRNLFFP…GGHYGHGGGH (92 aa).

Expressed in lung by serous cells of the submucosal gland (at protein level). Detected in the placenta, lung and testis.

It is found in the membrane. This is Mucin-22 (MUC22) from Homo sapiens (Human).